The sequence spans 306 residues: Agmatinase (306 aa).

Mn(2+) is bound by residues His-126, Asp-149, His-151, Asp-153, Asp-230, and Asp-232.

The protein belongs to the arginase family. Agmatinase subfamily. It depends on Mn(2+) as a cofactor.

The catalysed reaction is agmatine + H2O = urea + putrescine. It functions in the pathway amine and polyamine biosynthesis; putrescine biosynthesis via agmatine pathway; putrescine from agmatine: step 1/1. In terms of biological role, catalyzes the formation of putrescine from agmatine. The polypeptide is Agmatinase (Cronobacter sakazakii (strain ATCC BAA-894) (Enterobacter sakazakii)).